A 336-amino-acid chain; its full sequence is MKFVDEATLIVQSGDGGRGCVSFRRERFIPRGGPDGGNGGKGGDVVLVATRAKHTLYHFRYKHRFQAQRGGYGSGANRHGKNGEDLLIEVPVGTIVRDAETSEIIADLSVEEERCIVCHGGRGGKGNKHFTSSTYRAPRFAQDGEEGEEKTLKLELKLLADVGLVGLPNAGKSSLITALTAARPKIGAYPFTTLAPSLGVLQDPYGEPVVIADIPGLIEGAAQGAGLGHRFLRHIERNRLLIHLIDASQVTAEDPLASYQAINKELSSYDQALGEKPQIVVLNKMDLPEAEEGACLFKQSCGNLQVLQISAILGEGLDELIEAIFAQLREPGRRPS.

Positions 1–159 (MKFVDEATLI…KTLKLELKLL (159 aa)) constitute an Obg domain. The OBG-type G domain occupies 160 to 329 (ADVGLVGLPN…LIEAIFAQLR (170 aa)). Residues 166-173 (GLPNAGKS), 191-195 (FTTLA), 213-216 (DIPG), 283-286 (NKMD), and 310-312 (SAI) each bind GTP. 2 residues coordinate Mg(2+): serine 173 and threonine 193.

The protein belongs to the TRAFAC class OBG-HflX-like GTPase superfamily. OBG GTPase family. In terms of assembly, monomer. Requires Mg(2+) as cofactor.

Its subcellular location is the cytoplasm. An essential GTPase which binds GTP, GDP and possibly (p)ppGpp with moderate affinity, with high nucleotide exchange rates and a fairly low GTP hydrolysis rate. Plays a role in control of the cell cycle, stress response, ribosome biogenesis and in those bacteria that undergo differentiation, in morphogenesis control. This Desulfatibacillum aliphaticivorans protein is GTPase Obg.